Here is a 462-residue protein sequence, read N- to C-terminus: Bindin (462 aa).

A signal peptide spans 1–19 (MARQLSVILVALTLTTALA). The propeptide occupies 20 to 244 (ENFPTRTSAP…DSGRSARKKR (225 aa)). Disordered stretches follow at residues 155-194 (DDRRKRRDAEQDSDDVTKRASPRKGDKPAGHKLKDLAPKD) and 221-278 (RTRR…QGMG). Residues 372-380 (LRHLRHHSN) form a fucose-binding domain region.

Belongs to the bindin family.

The protein localises to the cytoplasmic vesicle. The protein resides in the secretory vesicle. Its subcellular location is the acrosome lumen. In terms of biological role, species-specific sea urchin sperm protein required for adhesion of sperm to the egg surface during fertilization. Bindin coats the acrosomal process after it is externalized by the acrosome reaction. It binds to sulfated, fucose-containing polysaccharides on the vitelline layer receptor proteoglycans which cover the egg plasma membrane. This Lytechinus variegatus (Green sea urchin) protein is Bindin.